Reading from the N-terminus, the 518-residue chain is Light-independent protochlorophyllide reductase subunit B (518 aa).

Residue D36 participates in [4Fe-4S] cluster binding. D285 (proton donor) is an active-site residue. 420-421 (GL) is a substrate binding site.

It belongs to the ChlB/BchB/BchZ family. Protochlorophyllide reductase is composed of three subunits; BchL, BchN and BchB. Forms a heterotetramer of two BchB and two BchN subunits. [4Fe-4S] cluster is required as a cofactor.

It catalyses the reaction chlorophyllide a + oxidized 2[4Fe-4S]-[ferredoxin] + 2 ADP + 2 phosphate = protochlorophyllide a + reduced 2[4Fe-4S]-[ferredoxin] + 2 ATP + 2 H2O. The protein operates within porphyrin-containing compound metabolism; bacteriochlorophyll biosynthesis (light-independent). Its function is as follows. Component of the dark-operative protochlorophyllide reductase (DPOR) that uses Mg-ATP and reduced ferredoxin to reduce ring D of protochlorophyllide (Pchlide) to form chlorophyllide a (Chlide). This reaction is light-independent. The NB-protein (BchN-BchB) is the catalytic component of the complex. This chain is Light-independent protochlorophyllide reductase subunit B, found in Bradyrhizobium sp. (strain ORS 278).